Reading from the N-terminus, the 148-residue chain is SsrA-binding protein (148 aa).

It belongs to the SmpB family.

The protein localises to the cytoplasm. Required for rescue of stalled ribosomes mediated by trans-translation. Binds to transfer-messenger RNA (tmRNA), required for stable association of tmRNA with ribosomes. tmRNA and SmpB together mimic tRNA shape, replacing the anticodon stem-loop with SmpB. tmRNA is encoded by the ssrA gene; the 2 termini fold to resemble tRNA(Ala) and it encodes a 'tag peptide', a short internal open reading frame. During trans-translation Ala-aminoacylated tmRNA acts like a tRNA, entering the A-site of stalled ribosomes, displacing the stalled mRNA. The ribosome then switches to translate the ORF on the tmRNA; the nascent peptide is terminated with the 'tag peptide' encoded by the tmRNA and targeted for degradation. The ribosome is freed to recommence translation, which seems to be the essential function of trans-translation. In Mycoplasma mycoides subsp. mycoides SC (strain CCUG 32753 / NCTC 10114 / PG1), this protein is SsrA-binding protein.